Reading from the N-terminus, the 366-residue chain is DNA-directed RNA polymerase II subunit GRINL1A (366 aa).

The disordered stretch occupies residues 1–23 (MFSLPRGFEPPAPEDLGRQSSAE). Residues 15 to 39 (DLGRQSSAELRERLRRQERLLRNEK) are a coiled coil. The segment at 29 to 68 (RRQERLLRNEKFICKLPDKGKKISDTVAKLKAAISEREEV) is important for transcription repressor activity. 4 disordered regions span residues 88–140 (ATTR…HRGN), 158–182 (IRARAPSSEVKEHLPQHSVSSQEEE), 201–225 (ADQSEPSEENTSTENFPELQSETPK), and 237–280 (ARNP…RRAR). Residues 90–100 (TRADTDVDKAQ) show a composition bias toward basic and acidic residues. Low complexity predominate over residues 101–127 (SSDLMLDTSSLDPDCSSIDIKSSKSTS). Residues 225–296 (KKPHYMKVLE…TAARLLPLHH (72 aa)) are interaction with Pol II. Residues 251–272 (VLPTQQSDSPSHCQRGQSPASS) are compositionally biased toward polar residues. Serine 268 bears the Phosphoserine mark. The important for transcription repressor activity stretch occupies residues 297-312 (LPAQLLSIEESLALQR). Residues 299 to 333 (AQLLSIEESLALQREQKQNYEEMQAKLAAQKLAER) are a coiled coil. An interaction with Pol II region spans residues 313-338 (EQKQNYEEMQAKLAAQKLAERLNIKM). A disordered region spans residues 338-366 (MQSYNPEGESSGRYREVRDEADAQSSDEC). Residues 347–358 (SSGRYREVRDEA) show a composition bias toward basic and acidic residues.

It belongs to the GRINL1 family. As to quaternary structure, component of the Pol II(G) complex, which contains the RNA polymerase II (Pol II) core complex subunits and POLR2M isoform 1. Pol II(G) appears to be an abundant form of Pol II. Dephosphorylated at Ser-268 by the PNUTS-PP1 complex, promoting RNA polymerase II transcription pause-release.

The protein resides in the nucleus. Appears to be a stable component of the Pol II(G) complex form of RNA polymerase II (Pol II). Pol II synthesizes mRNA precursors and many functional non-coding RNAs and is the central component of the basal RNA polymerase II transcription machinery. May play a role in the Mediator complex-dependent regulation of transcription activation. Acts as a negative regulator of transcriptional activation; this repression is relieved by the Mediator complex, which restores Pol II(G) activator-dependent transcription to a level equivalent to that of Pol II. This is DNA-directed RNA polymerase II subunit GRINL1A (Polr2m) from Mus musculus (Mouse).